The sequence spans 493 residues: tRNA(Ile)-lysidine synthase, chloroplastic (493 aa).

Residue 68–73 (SGGQDS) participates in ATP binding.

It belongs to the tRNA(Ile)-lysidine synthase family.

The protein localises to the plastid. It localises to the chloroplast. It catalyses the reaction cytidine(34) in tRNA(Ile2) + L-lysine + ATP = lysidine(34) in tRNA(Ile2) + AMP + diphosphate + H(+). Its function is as follows. Ligates lysine onto the cytidine present at position 34 of the AUA codon-specific tRNA(Ile) that contains the anticodon CAU, in an ATP-dependent manner. Cytidine is converted to lysidine, thus changing the amino acid specificity of the tRNA from methionine to isoleucine. The protein is tRNA(Ile)-lysidine synthase, chloroplastic of Staurastrum punctulatum (Green alga).